A 307-amino-acid polypeptide reads, in one-letter code: Aspartate carbamoyltransferase catalytic subunit (307 aa).

Carbamoyl phosphate-binding residues include arginine 49 and threonine 50. An L-aspartate-binding site is contributed by lysine 77. Residues arginine 99, histidine 127, and glutamine 130 each coordinate carbamoyl phosphate. Residues arginine 160 and arginine 211 each coordinate L-aspartate. 2 residues coordinate carbamoyl phosphate: alanine 250 and proline 251.

This sequence belongs to the aspartate/ornithine carbamoyltransferase superfamily. ATCase family. In terms of assembly, heterododecamer (2C3:3R2) of six catalytic PyrB chains organized as two trimers (C3), and six regulatory PyrI chains organized as three dimers (R2).

The enzyme catalyses carbamoyl phosphate + L-aspartate = N-carbamoyl-L-aspartate + phosphate + H(+). It functions in the pathway pyrimidine metabolism; UMP biosynthesis via de novo pathway; (S)-dihydroorotate from bicarbonate: step 2/3. Functionally, catalyzes the condensation of carbamoyl phosphate and aspartate to form carbamoyl aspartate and inorganic phosphate, the committed step in the de novo pyrimidine nucleotide biosynthesis pathway. This Bacillus pumilus (strain SAFR-032) protein is Aspartate carbamoyltransferase catalytic subunit.